The primary structure comprises 411 residues: Citrate synthase (411 aa).

Active-site residues include His-304 and Asp-363.

Belongs to the citrate synthase family.

It catalyses the reaction oxaloacetate + acetyl-CoA + H2O = citrate + CoA + H(+). The protein operates within carbohydrate metabolism; tricarboxylic acid cycle; isocitrate from oxaloacetate: step 1/2. The polypeptide is Citrate synthase (gltA) (Rickettsia massiliae).